A 502-amino-acid polypeptide reads, in one-letter code: Mannitol 2-dehydrogenase (502 aa).

Position 37-48 (37-48 (IVHVGVGGFHRA)) interacts with NAD(+).

It belongs to the mannitol dehydrogenase family. Monomer.

The enzyme catalyses D-mannitol + NAD(+) = D-fructose + NADH + H(+). Its function is as follows. Catalyzes the NAD(H)-dependent interconversion of D-fructose and D-mannitol in the mannitol metabolic pathway. The sequence is that of Mannitol 2-dehydrogenase from Aspergillus oryzae (strain ATCC 42149 / RIB 40) (Yellow koji mold).